Consider the following 523-residue polypeptide: Putative glycerol-3-phosphate transporter 1 (523 aa).

12 consecutive transmembrane segments (helical) span residues 29–49 (LSYSAYQAIVLIVTFLAYASY), 102–122 (VLLGEIDVAFLAVYAFGMYFA), 133–153 (IFLTVGMIGTGLFTSLFGVGY), 163–183 (FLIMQMLAGLFQSSGWPSVVA), 196–216 (LIMGIWNAHTSVGNITGSLIA), 228–248 (FVVPGVIIVVIGLVNYAFLPV), 306–326 (FALCLFFAKLVAYTFLYWLPF), 344–364 (GNLSTMFDVGGVVGGIMAGYI), 368–388 (IGARAITAASFMYCSIPALFF), 402–422 (SLMFLTGMLVNGPYALITTAV), 444–464 (AIIDGTGSVGAAVGPLLTGYI), and 468–488 (GSWTAVFTMLMGAAFVAGLLL).

This sequence belongs to the major facilitator superfamily. Organophosphate:Pi antiporter (OPA) (TC 2.A.1.4) family.

It is found in the membrane. This chain is Putative glycerol-3-phosphate transporter 1, found in Arabidopsis thaliana (Mouse-ear cress).